Here is a 189-residue protein sequence, read N- to C-terminus: uncharacterized protein (189 aa).

The Macro domain maps to 1–174 (MKCWTLGDRV…GMEKGVREAL (174 aa)).

This is an uncharacterized protein from Aeropyrum pernix (strain ATCC 700893 / DSM 11879 / JCM 9820 / NBRC 100138 / K1).